The sequence spans 174 residues: RNA pyrophosphohydrolase (174 aa).

The Nudix hydrolase domain maps to glycine 6–lysine 149. The short motif at glycine 38–glycine 59 is the Nudix box element.

Belongs to the Nudix hydrolase family. RppH subfamily. Requires a divalent metal cation as cofactor.

Functionally, accelerates the degradation of transcripts by removing pyrophosphate from the 5'-end of triphosphorylated RNA, leading to a more labile monophosphorylated state that can stimulate subsequent ribonuclease cleavage. The polypeptide is RNA pyrophosphohydrolase (Shewanella baltica (strain OS223)).